Here is a 328-residue protein sequence, read N- to C-terminus: Coiled-coil domain-containing protein 54 (328 aa).

Residues 122 to 151 (TTKDILSMKEDIKALKKKVTELEKQNSYSR) are a coiled coil. Phosphothreonine is present on threonine 182. Positions 186–197 (TDREMSSAEPEK) are enriched in basic and acidic residues. The disordered stretch occupies residues 186 to 205 (TDREMSSAEPEKVPSYPKST).

This chain is Coiled-coil domain-containing protein 54 (CCDC54), found in Macaca fascicularis (Crab-eating macaque).